We begin with the raw amino-acid sequence, 262 residues long: Thiazole synthase (262 aa).

K97 functions as the Schiff-base intermediate with DXP in the catalytic mechanism. 1-deoxy-D-xylulose 5-phosphate-binding positions include G158, A185–G186, and N207–T208. Positions D243 to Y262 are disordered.

It belongs to the ThiG family. In terms of assembly, homotetramer. Forms heterodimers with either ThiH or ThiS.

The protein resides in the cytoplasm. It carries out the reaction [ThiS sulfur-carrier protein]-C-terminal-Gly-aminoethanethioate + 2-iminoacetate + 1-deoxy-D-xylulose 5-phosphate = [ThiS sulfur-carrier protein]-C-terminal Gly-Gly + 2-[(2R,5Z)-2-carboxy-4-methylthiazol-5(2H)-ylidene]ethyl phosphate + 2 H2O + H(+). Its pathway is cofactor biosynthesis; thiamine diphosphate biosynthesis. Functionally, catalyzes the rearrangement of 1-deoxy-D-xylulose 5-phosphate (DXP) to produce the thiazole phosphate moiety of thiamine. Sulfur is provided by the thiocarboxylate moiety of the carrier protein ThiS. In vitro, sulfur can be provided by H(2)S. This is Thiazole synthase from Neisseria meningitidis serogroup C (strain 053442).